We begin with the raw amino-acid sequence, 156 residues long: 1-methylthio-D-xylulose 5-phosphate methylsulfurylase (156 aa).

In terms of domain architecture, Cupin type-2 spans 55-122 (YFEVGPGGHS…ADEALGFLCM (68 aa)). Mn(2+) is bound by residues Glu67, His69, His73, and His107. The active site involves Cys121.

It catalyses the reaction S-methyl-1-thio-D-xylulose 5-phosphate + glutathione = S-(methylsulfanyl)glutathione + 1-deoxy-D-xylulose 5-phosphate. The catalysed reaction is S-(methylsulfanyl)glutathione + AH2 = methanethiol + glutathione + A. The protein operates within amino-acid biosynthesis; L-methionine biosynthesis via salvage pathway. It participates in metabolic intermediate biosynthesis; 1-deoxy-D-xylulose 5-phosphate biosynthesis. Functionally, catalyzes the formation of S-(methylsulfanyl)glutathione and 1-deoxy-D-xylulose 5-phosphate (DXP) from 1-methylthioxylulose 5-phosphate (MTXu-5P). The S-(methylsulfanyl)glutathione is reductively cleaved to relase methanethiol in a second reaction. Involved in the MTA-isoprenoid shunt of the methionine salvage pathway. This chain is 1-methylthio-D-xylulose 5-phosphate methylsulfurylase, found in Rhodospirillum rubrum (strain ATCC 11170 / ATH 1.1.1 / DSM 467 / LMG 4362 / NCIMB 8255 / S1).